Here is a 393-residue protein sequence, read N- to C-terminus: S-adenosylmethionine synthase (393 aa).

Glu-9 serves as a coordination point for Mg(2+). Residue His-15 coordinates ATP. Position 43 (Glu-43) interacts with K(+). 2 residues coordinate L-methionine: Glu-56 and Gln-99. Residues 167 to 169 (DGK), 235 to 238 (SGRF), Asp-246, 252 to 253 (RK), Ala-269, Lys-273, and Lys-277 contribute to the ATP site. Asp-246 is an L-methionine binding site. Lys-277 contributes to the L-methionine binding site.

This sequence belongs to the AdoMet synthase family. In terms of assembly, homotetramer. It depends on Mn(2+) as a cofactor. Mg(2+) is required as a cofactor. Requires Co(2+) as cofactor. The cofactor is K(+).

It is found in the cytoplasm. The enzyme catalyses L-methionine + ATP + H2O = S-adenosyl-L-methionine + phosphate + diphosphate. The protein operates within amino-acid biosynthesis; S-adenosyl-L-methionine biosynthesis; S-adenosyl-L-methionine from L-methionine: step 1/1. In terms of biological role, catalyzes the formation of S-adenosylmethionine from methionine and ATP. The reaction comprises two steps that are both catalyzed by the same enzyme: formation of S-adenosylmethionine (AdoMet) and triphosphate, and subsequent hydrolysis of the triphosphate. The chain is S-adenosylmethionine synthase (SAM) from Camellia sinensis (Tea plant).